A 340-amino-acid chain; its full sequence is Pre-mRNA-splicing factor cwf17 (340 aa).

WD repeat units follow at residues 48–87 (GHTA…KNYG), 91–130 (GCKG…KIRK), 133–173 (GHAG…CIKT), 175–214 (EEKY…CSHV), 217–256 (GHKD…SAQR), 267–306 (GQEH…RYVL), and 308–339 (GHEG…LGEL).

As to quaternary structure, belongs to the 40S cdc5-associated complex (or cwf complex), a spliceosome sub-complex reminiscent of a late-stage spliceosome composed of the U2, U5 and U6 snRNAs and at least brr2, cdc5, cwf2/prp3, cwf3/syf1, cwf4/syf3, cwf5/ecm2, spp42/cwf6, cwf7/spf27, cwf8, cwf9, cwf10, cwf11, cwf12, prp45/cwf13, cwf14, cwf15, cwf16, cwf17, cwf18, cwf19, cwf20, cwf21, cwf22, cwf23, cwf24, cwf25, cwf26, cyp7/cwf27, cwf28, cwf29/ist3, lea1, msl1, prp5/cwf1, prp10, prp12/sap130, prp17, prp22, sap61, sap62, sap114, sap145, slu7, smb1, smd1, smd3, smf1, smg1 and syf2.

The protein resides in the nucleus. Its function is as follows. Involved in mRNA splicing where it associates with cdc5 and the other cwf proteins as part of the spliceosome. The sequence is that of Pre-mRNA-splicing factor cwf17 (cwf17) from Schizosaccharomyces pombe (strain 972 / ATCC 24843) (Fission yeast).